The primary structure comprises 141 residues: Large ribosomal subunit protein uL11 (141 aa).

It belongs to the universal ribosomal protein uL11 family. As to quaternary structure, part of the ribosomal stalk of the 50S ribosomal subunit. Interacts with L10 and the large rRNA to form the base of the stalk. L10 forms an elongated spine to which L12 dimers bind in a sequential fashion forming a multimeric L10(L12)X complex. Post-translationally, one or more lysine residues are methylated.

Forms part of the ribosomal stalk which helps the ribosome interact with GTP-bound translation factors. The polypeptide is Large ribosomal subunit protein uL11 (Wolinella succinogenes (strain ATCC 29543 / DSM 1740 / CCUG 13145 / JCM 31913 / LMG 7466 / NCTC 11488 / FDC 602W) (Vibrio succinogenes)).